Here is a 122-residue protein sequence, read N- to C-terminus: uncharacterized protein (122 aa).

2 helical membrane passes run P43–I63 and A76–F96.

The protein localises to the membrane. This is an uncharacterized protein from Schizosaccharomyces pombe (strain 972 / ATCC 24843) (Fission yeast).